Here is a 303-residue protein sequence, read N- to C-terminus: Histone deacetylase HDT2 (303 aa).

A compositionally biased stretch (acidic residues) spans 100 to 112 (EMDLDSEDEEEEL). The disordered stretch occupies residues 100-282 (EMDLDSEDEE…SGGSVPCKSC (183 aa)). Positions 119–133 (ENGKADGKEEQKNQE) are enriched in basic and acidic residues. Residues 154-203 (DSDDSDEDESDDSDEDDSDDSDEGEGLSPDEGDDDSSDEDDTSDDDEEET) are compositionally biased toward acidic residues. A compositionally biased stretch (basic and acidic residues) spans 204–217 (PTPKKPEAGKKRGA). A C2H2-type zinc finger spans residues 277 to 300 (VPCKSCSKTFNSEMALQAHSKAKH).

Belongs to the histone deacetylase HD2 family. Multimer. Possibly forms a homotrimer with HDT1 and/or HDT3.

It localises to the nucleus. The protein resides in the nucleolus. In terms of biological role, mediates the deacetylation of lysine residues on the N-terminal part of the core histones (H2A, H2B, H3 and H4). Histone deacetylation gives a tag for epigenetic repression and plays an important role in transcriptional regulation, cell cycle progression and developmental events. The polypeptide is Histone deacetylase HDT2 (HDT2) (Zea mays (Maize)).